A 242-amino-acid chain; its full sequence is Ubiquinone biosynthesis O-methyltransferase (242 aa).

S-adenosyl-L-methionine contacts are provided by Arg-44, Gly-64, Asp-85, and Met-129.

It belongs to the methyltransferase superfamily. UbiG/COQ3 family.

The enzyme catalyses a 3-demethylubiquinol + S-adenosyl-L-methionine = a ubiquinol + S-adenosyl-L-homocysteine + H(+). It catalyses the reaction a 3-(all-trans-polyprenyl)benzene-1,2-diol + S-adenosyl-L-methionine = a 2-methoxy-6-(all-trans-polyprenyl)phenol + S-adenosyl-L-homocysteine + H(+). Its pathway is cofactor biosynthesis; ubiquinone biosynthesis. Functionally, O-methyltransferase that catalyzes the 2 O-methylation steps in the ubiquinone biosynthetic pathway. In Klebsiella pneumoniae (strain 342), this protein is Ubiquinone biosynthesis O-methyltransferase.